Reading from the N-terminus, the 473-residue chain is Serine palmitoyltransferase 1 (473 aa).

Over 1–15 the chain is Lumenal; that stretch reads MAMAAEQWVLVEMVQ. Positions 1 to 66 are interaction with SPTLC2; it reads MAMAAEQWVL…KEELIEEWQP (66 aa). The chain crosses the membrane as a helical span at residues 16-36; it reads ALYEAPAYHLILEGILILWII. Topologically, residues 37–473 are cytoplasmic; that stretch reads RLVFSKTYKL…IREAAQAVLL (437 aa). Tyrosine 164 is modified (phosphotyrosine; by ABL).

The protein belongs to the class-II pyridoxal-phosphate-dependent aminotransferase family. Component of the serine palmitoyltransferase (SPT) complex, which is also composed of SPTLC2 or SPTLC3 and SPTSSA or SPTSSB. The heterodimer with SPTLC2 or SPTLC3 forms the catalytic core of the enzyme, while SPTSSA or SPTSSB subunits determine substrate specificity. SPT also interacts with ORMDL proteins, especially ORMDL3, which negatively regulate SPT activity in the presence of ceramides. Forms dimers of heterodimers with SPTLC2. Interacts with RTN4. Pyridoxal 5'-phosphate serves as cofactor. Phosphorylation at Tyr-164 inhibits activity and promotes cell survival.

The protein localises to the endoplasmic reticulum membrane. The catalysed reaction is L-serine + hexadecanoyl-CoA + H(+) = 3-oxosphinganine + CO2 + CoA. The enzyme catalyses octadecanoyl-CoA + L-serine + H(+) = 3-oxoeicosasphinganine + CO2 + CoA. It catalyses the reaction tetradecanoyl-CoA + L-serine + H(+) = 3-oxohexadecasphinganine + CO2 + CoA. It carries out the reaction dodecanoyl-CoA + L-serine + H(+) = 3-oxotetradecasphinganine + CO2 + CoA. Its pathway is lipid metabolism; sphingolipid metabolism. SPT complex catalytic activity is negatively regulated by ORMDL proteins, including ORMDL3, in the presence of ceramides. This mechanism allows to maintain ceramide levels at sufficient concentrations for the production of complex sphingolipids, but which prevents the accumulation of ceramides to levels that trigger apoptosis. Component of the serine palmitoyltransferase multisubunit enzyme (SPT) that catalyzes the initial and rate-limiting step in sphingolipid biosynthesis by condensing L-serine and activated acyl-CoA (most commonly palmitoyl-CoA) to form long-chain bases. The SPT complex is also composed of SPTLC2 or SPTLC3 and SPTSSA or SPTSSB. Within this complex, the heterodimer with SPTLC2 or SPTLC3 forms the catalytic core. The composition of the serine palmitoyltransferase (SPT) complex determines the substrate preference. The SPTLC1-SPTLC2-SPTSSA complex shows a strong preference for C16-CoA substrate, while the SPTLC1-SPTLC3-SPTSSA isozyme uses both C14-CoA and C16-CoA as substrates, with a slight preference for C14-CoA. The SPTLC1-SPTLC2-SPTSSB complex shows a strong preference for C18-CoA substrate, while the SPTLC1-SPTLC3-SPTSSB isozyme displays an ability to use a broader range of acyl-CoAs, without apparent preference. Required for adipocyte cell viability and metabolic homeostasis. This is Serine palmitoyltransferase 1 (SPTLC1) from Cricetulus griseus (Chinese hamster).